The sequence spans 130 residues: Small ribosomal subunit protein uS8 (130 aa).

It belongs to the universal ribosomal protein uS8 family. In terms of assembly, part of the 30S ribosomal subunit.

In terms of biological role, one of the primary rRNA binding proteins, it binds directly to 16S rRNA central domain where it helps coordinate assembly of the platform of the 30S subunit. This chain is Small ribosomal subunit protein uS8, found in Methanothermobacter thermautotrophicus (strain ATCC 29096 / DSM 1053 / JCM 10044 / NBRC 100330 / Delta H) (Methanobacterium thermoautotrophicum).